A 408-amino-acid chain; its full sequence is MVQVNENYLKLKAGYLFPEIAKRVKAYSQSNKSADIIKLGIGDVTEPLPRACIEAMGKALDEMGTTDGFKGYGPEQGYSWLREKISEHDFISRGCQISSEEIFVSDGSKCDSSNILDILGKDNSIAVTDPVYPVYVDSNVMTGRTGDSLENGTYKGLTYLAINEDNNFLPELPEKKVDILYLCFPNNPTGATINKADLKKWVDYALQNKSLILFDAAYEAFIQDDNIPHSIYEIEGAKDCAIEFRSFSKNAGFTGVRCAFTVIPKNLKGLSSTNEEIDLWPLWNRRQSTKFNGVSYVVQRGAEAVYSLEGKKQVKGLIDFYMENAKIMKNKLQNAGYKVYGGDNAPYIWIKVPDQMSSWDFFDFLLQKVGVVGTPGSGFGLAGEGYFRLSAFNSRSNVLDAMERIINI.

Positions 15 and 42 each coordinate substrate. Residues Tyr72, 108-109, Tyr132, Asn187, Tyr218, and 246-248 contribute to the pyridoxal 5'-phosphate site; these read SK and SFS. Positions 109, 132, and 187 each coordinate substrate. An N6-(pyridoxal phosphate)lysine modification is found at Lys249. Pyridoxal 5'-phosphate-binding residues include Arg257 and Asn292. Residues Asn292 and Arg388 each coordinate substrate.

This sequence belongs to the class-I pyridoxal-phosphate-dependent aminotransferase family. LL-diaminopimelate aminotransferase subfamily. In terms of assembly, homodimer. Requires pyridoxal 5'-phosphate as cofactor.

The catalysed reaction is (2S,6S)-2,6-diaminopimelate + 2-oxoglutarate = (S)-2,3,4,5-tetrahydrodipicolinate + L-glutamate + H2O + H(+). Its pathway is amino-acid biosynthesis; L-lysine biosynthesis via DAP pathway; LL-2,6-diaminopimelate from (S)-tetrahydrodipicolinate (aminotransferase route): step 1/1. In terms of biological role, involved in the synthesis of meso-diaminopimelate (m-DAP or DL-DAP), required for both lysine and peptidoglycan biosynthesis. Catalyzes the direct conversion of tetrahydrodipicolinate to LL-diaminopimelate. This Prochlorococcus marinus (strain MIT 9301) protein is LL-diaminopimelate aminotransferase.